Reading from the N-terminus, the 332-residue chain is Myogenic-determination protein (332 aa).

The interval 22–54 is disordered; that stretch reads HNGYGQPTHPGYGFSAYSQQNPIAHPGQNPHQT. Residues 161-212 enclose the bHLH domain; the sequence is DRRKAATMRERRRLRKVNEAFEILKRRTSSNPNQRLPKVEILRNAIEYIESL. A compositionally biased stretch (polar residues) spans 293–309; the sequence is TTSPIQNKATPSASDTQ. Residues 293–332 are disordered; the sequence is TTSPIQNKATPSASDTQSPPSSGATAPTSLHVNFKRKCST. The span at 310-321 shows a compositional bias: low complexity; sequence SPPSSGATAPTS.

Efficient DNA binding requires dimerization with another bHLH protein.

It localises to the nucleus. Its function is as follows. May play an important role in the early development of muscle. This chain is Myogenic-determination protein (nau), found in Drosophila melanogaster (Fruit fly).